The primary structure comprises 694 residues: Heat shock protein HSP 90-alpha (694 aa).

Phosphothreonine; by PRKDC is present on residues Thr-5 and Thr-7. The interaction with NR3C1 stretch occupies residues 9 to 236 (DQPMEEEEVE…DKEVSDDEAK (228 aa)). Asn-51 contributes to the ATP binding site. Residues Lys-58 and Lys-84 each carry the N6-acetyllysine modification. ATP is bound by residues Asp-93, Lys-112, and Phe-138. Residues 228 to 241 (KEVSDDEAKQPDDK) are compositionally biased toward basic and acidic residues. The disordered stretch occupies residues 228–275 (KEVSDDEAKQPDDKPEIEDVGSDEEEEEKKDGDIDQEELNKTKPIWTR). 2 positions are modified to phosphoserine: Ser-231 and Ser-249. The segment covering 242-255 (PEIEDVGSDEEEEE) has biased composition (acidic residues). A compositionally biased stretch (basic and acidic residues) spans 256 to 268 (KKDGDIDQEELNK). Positions 258-578 (DGDIDQEELN…TANMERIMKA (321 aa)) are interaction with NR3C1. Residues 261–582 (IDQEELNKTK…ERIMKAQALR (322 aa)) are interaction with FNIP2 and TSC1. The segment at 261-694 (IDQEELNKTK…DDTSRMEEVD (434 aa)) is interaction with FLCN and FNIP1. At Tyr-289 the chain carries Phosphotyrosine. Residue Arg-376 coordinates ATP. The residue at position 419 (Lys-419) is an N6-acetyllysine. Ser-429 is subject to Phosphoserine. Lys-434 carries the post-translational modification N6-acetyllysine. Phosphoserine is present on Ser-452. At Lys-465 the chain carries N6-acetyllysine. At Tyr-468 the chain carries Phosphotyrosine. Lys-547 is subject to N6-acetyllysine. Position 560 is an S-nitrosocysteine (Cys-560). The interval 590-693 (MAAKKHLEVN…DDDTSRMEEV (104 aa)) is interaction with NR1D1. Ser-603 carries the post-translational modification Phosphoserine. Residues 644–694 (QTHANRIYRMIKLGLGIDEDDPTADDTAAAVTEEMPPLEGDDDTSRMEEVD) form a required for homodimerization region. A disordered region spans residues 662 to 694 (EDDPTADDTAAAVTEEMPPLEGDDDTSRMEEVD). The span at 668–677 (DDTAAAVTEE) shows a compositional bias: low complexity. The TPR repeat-binding signature appears at 685–694 (DDTSRMEEVD). The essential for interaction with SMYD3, TSC1 and STIP1/HOP stretch occupies residues 690-694 (MEEVD). Positions 691-694 (EEVD) are essential for interaction with SGTA and TTC1.

The protein belongs to the heat shock protein 90 family. As to quaternary structure, homodimer. Identified in NR3C1/GCR steroid receptor-chaperone complexes formed at least by NR3C1, HSP90AA1 and a variety of proteins containing TPR repeats such as FKBP4, FKBP5, PPID, PPP5C or STIP1. Forms a complex containing HSP90AA1, TSC1 and TSC2; TSC1 is required to recruit TCS2 to the complex. The closed form interacts (via the middle domain and TPR repeat-binding motif) with co-chaperone TSC1 (via C-terminus). Interacts with TOM34. Interacts with TERT; the interaction, together with PTGES3, is required for correct assembly and stabilization of the TERT holoenzyme complex. Interacts with CHORDC1 and DNAJC7. Interacts with STUB1 and UBE2N; may couple the chaperone and ubiquitination systems. Interacts (via TPR repeat-binding motif) with PPP5C (via TPR repeats); the interaction is direct and activates PPP5C phosphatase activity. Following LPS binding, may form a complex with CXCR4, GDF5 and HSPA8. Interacts with KSR1. Interacts with co-chaperone CDC37 (via C-terminus); the interaction inhibits HSP90AA1 ATPase activity. May interact with NWD1. Interacts with FNIP1 and FNIP2; the interaction inhibits HSP90AA1 ATPase activity. Interacts with co-chaperone AHSA1 (phosphorylated on 'Tyr-223'); the interaction activates HSP90AA1 ATPase activity and results in the dissociation of TSC1 from HSP90AA1. Interacts with FLCN in the presence of FNIP1. Interacts with HSP70, STIP1 and PTGES3. Interacts with SMYD3; this interaction enhances SMYD3 histone-lysine N-methyltransferase. Interacts with SGTA (via TPR repeats). Interacts with TTC1 (via TPR repeats). Interacts with HSF1 in an ATP-dependent manner. Interacts with MET; the interaction suppresses MET kinase activity. Interacts with ERBB2 in an ATP-dependent manner; the interaction suppresses ERBB2 kinase activity. Interacts with HIF1A, KEAP1 and RHOBTB2. Interacts with HSF1; this interaction is decreased in a IER5-dependent manner, promoting HSF1 accumulation in the nucleus, homotrimerization and DNA-binding activities. Interacts with STUB1 and SMAD3. Interacts with HSP90AB1; interaction is constitutive. Interacts with HECTD1 (via N-terminus). Interacts with NR3C1 (via domain NR LBD) and NR1D1 (via domain NR LBD). Interacts with NLPR12. Interacts with PDCL3. Interacts with TOMM70; the interaction is required for preprotein mitochondrial import. Interacts with TOMM70, IRF3 and TBK1; the interactions are direct and mediate the association of TOMM70 with IRF3 and TBK1. Forms a complex with ASL, ASS1 and NOS2; the complex regulates cell-autonomous L-arginine synthesis and citrulline recycling while channeling extracellular L-arginine to nitric oxide synthesis pathway. ISGylated. In terms of processing, S-nitrosylated; negatively regulates the ATPase activity and the activation of eNOS by HSP90AA1. Post-translationally, ubiquitinated via 'Lys-63'-linked polyubiquitination by HECTD1. Ubiquitination promotes translocation into the cytoplasm away from the membrane and secretory pathways.

Its subcellular location is the nucleus. The protein localises to the cytoplasm. It localises to the melanosome. The protein resides in the cell membrane. It is found in the mitochondrion. The enzyme catalyses ATP + H2O = ADP + phosphate + H(+). With respect to regulation, in the resting state, through the dimerization of its C-terminal domain, HSP90 forms a homodimer which is defined as the open conformation. Upon ATP-binding, the N-terminal domain undergoes significant conformational changes and comes in contact to form an active closed conformation. After HSP90 finishes its chaperoning tasks of assisting the proper folding, stabilization and activation of client proteins under the active state, ATP molecule is hydrolyzed to ADP which then dissociates from HSP90 and directs the protein back to the resting state. Co-chaperone TSC1 promotes ATP binding and inhibits HSP90AA1 ATPase activity. Binding to phosphorylated AHSA1 promotes HSP90AA1 ATPase activity. Inhibited by geldanamycin, Ganetespib (STA-9090) and SNX-2112. Its function is as follows. Molecular chaperone that promotes the maturation, structural maintenance and proper regulation of specific target proteins involved for instance in cell cycle control and signal transduction. Undergoes a functional cycle that is linked to its ATPase activity which is essential for its chaperone activity. This cycle probably induces conformational changes in the client proteins, thereby causing their activation. Interacts dynamically with various co-chaperones that modulate its substrate recognition, ATPase cycle and chaperone function. Engages with a range of client protein classes via its interaction with various co-chaperone proteins or complexes, that act as adapters, simultaneously able to interact with the specific client and the central chaperone itself. Recruitment of ATP and co-chaperone followed by client protein forms a functional chaperone. After the completion of the chaperoning process, properly folded client protein and co-chaperone leave HSP90 in an ADP-bound partially open conformation and finally, ADP is released from HSP90 which acquires an open conformation for the next cycle. Plays a critical role in mitochondrial import, delivers preproteins to the mitochondrial import receptor TOMM70. Apart from its chaperone activity, it also plays a role in the regulation of the transcription machinery. HSP90 and its co-chaperones modulate transcription at least at three different levels. In the first place, they alter the steady-state levels of certain transcription factors in response to various physiological cues. Second, they modulate the activity of certain epigenetic modifiers, such as histone deacetylases or DNA methyl transferases, and thereby respond to the change in the environment. Third, they participate in the eviction of histones from the promoter region of certain genes and thereby turn on gene expression. Binds bacterial lipopolysaccharide (LPS) and mediates LPS-induced inflammatory response, including TNF secretion by monocytes. Antagonizes STUB1-mediated inhibition of TGF-beta signaling via inhibition of STUB1-mediated SMAD3 ubiquitination and degradation. Mediates the association of TOMM70 with IRF3 or TBK1 in mitochondrial outer membrane which promotes host antiviral response. In Oryctolagus cuniculus (Rabbit), this protein is Heat shock protein HSP 90-alpha (HSP90AA1).